Here is a 176-residue protein sequence, read N- to C-terminus: Ribosome maturation factor RimM (176 aa).

Residues 97–176 (EDEFYWRDLI…QILVDWDPDF (80 aa)) form the PRC barrel domain.

Belongs to the RimM family. In terms of assembly, binds ribosomal protein uS19.

Its subcellular location is the cytoplasm. In terms of biological role, an accessory protein needed during the final step in the assembly of 30S ribosomal subunit, possibly for assembly of the head region. Essential for efficient processing of 16S rRNA. May be needed both before and after RbfA during the maturation of 16S rRNA. It has affinity for free ribosomal 30S subunits but not for 70S ribosomes. The polypeptide is Ribosome maturation factor RimM (Shewanella loihica (strain ATCC BAA-1088 / PV-4)).